A 247-amino-acid chain; its full sequence is ATP synthase delta chain, chloroplastic (247 aa).

A chloroplast-targeting transit peptide spans 1 to 60 (MAALRLASFTLRPAAAAAASASSGATPAAPRSASFARAARGLPSLRLAPPRRRGDLVRPR).

It belongs to the ATPase delta chain family. As to quaternary structure, F-type ATPases have 2 components, CF(1) - the catalytic core - and CF(0) - the membrane proton channel. CF(1) has five subunits: alpha(3), beta(3), gamma(1), delta(1), epsilon(1). CF(0) has three main subunits: a, b and c.

It localises to the plastid. The protein localises to the chloroplast thylakoid membrane. This protein seems to be part of the stalk that links CF(0) to CF(1). It either transmits conformational changes from CF(0) into CF(1) or is implicated in proton conduction. This Sorghum bicolor (Sorghum) protein is ATP synthase delta chain, chloroplastic (ATPD).